Here is a 644-residue protein sequence, read N- to C-terminus: Chaperone protein DnaK (644 aa).

T199 is subject to Phosphothreonine; by autocatalysis. The tract at residues 602-644 (IYAKKSSEGQTAQGQTQSQESTKPAEEGVVDAEFEEVKEEDKK) is disordered. The segment covering 609-623 (EGQTAQGQTQSQEST) has biased composition (polar residues). Residues 629 to 644 (GVVDAEFEEVKEEDKK) are compositionally biased toward acidic residues.

This sequence belongs to the heat shock protein 70 family.

Acts as a chaperone. This chain is Chaperone protein DnaK, found in Legionella pneumophila (strain Lens).